A 339-amino-acid polypeptide reads, in one-letter code: Glycerol-3-phosphate dehydrogenase [NAD(P)+] (339 aa).

Positions 11, 12, and 109 each coordinate NADPH. 3 residues coordinate sn-glycerol 3-phosphate: Lys-109, Gly-140, and Ser-142. Residue Ala-144 coordinates NADPH. Residues Lys-195, Asp-249, Ser-259, Arg-260, and Asn-261 each contribute to the sn-glycerol 3-phosphate site. Lys-195 (proton acceptor) is an active-site residue. Position 260 (Arg-260) interacts with NADPH. Positions 284 and 286 each coordinate NADPH.

It belongs to the NAD-dependent glycerol-3-phosphate dehydrogenase family.

The protein localises to the cytoplasm. It catalyses the reaction sn-glycerol 3-phosphate + NAD(+) = dihydroxyacetone phosphate + NADH + H(+). It carries out the reaction sn-glycerol 3-phosphate + NADP(+) = dihydroxyacetone phosphate + NADPH + H(+). It participates in membrane lipid metabolism; glycerophospholipid metabolism. Catalyzes the reduction of the glycolytic intermediate dihydroxyacetone phosphate (DHAP) to sn-glycerol 3-phosphate (G3P), the key precursor for phospholipid synthesis. This Lactobacillus helveticus (strain DPC 4571) protein is Glycerol-3-phosphate dehydrogenase [NAD(P)+].